Consider the following 122-residue polypeptide: Insulin-like growth factor 1 (122 aa).

Positions 49–77 are b; sequence GPETLCGAELVDALQFVCGDRGFYFNKPT. Intrachain disulfides connect cysteine 54–cysteine 96, cysteine 66–cysteine 109, and cysteine 95–cysteine 100. The interval 78–89 is c; sequence GYGSSSRRAPQT. Positions 90–110 are a; that stretch reads GIVDECCFRSCDLRRLEMYCA. A d region spans residues 111–118; that stretch reads PLKPAKSA. A propeptide spans 119 to 122 (e peptide); that stretch reads RSVR.

Belongs to the insulin family. Forms a ternary complex with IGFR1 and ITGAV:ITGB3. Forms a ternary complex with IGFR1 and ITGA6:ITGB4. Forms a ternary complex with IGFBP3 and ALS.

It localises to the secreted. In terms of biological role, the insulin-like growth factors, isolated from plasma, are structurally and functionally related to insulin but have a much higher growth-promoting activity. May be a physiological regulator of [1-14C]-2-deoxy-D-glucose (2DG) transport and glycogen synthesis in osteoblasts. Stimulates glucose transport in bone-derived osteoblastic (PyMS) cells and is effective at much lower concentrations than insulin, not only regarding glycogen and DNA synthesis but also with regard to enhancing glucose uptake. May play a role in synapse maturation. Ca(2+)-dependent exocytosis of IGF1 is required for sensory perception of smell in the olfactory bulb. Acts as a ligand for IGF1R. Binds to the alpha subunit of IGF1R, leading to the activation of the intrinsic tyrosine kinase activity which autophosphorylates tyrosine residues in the beta subunit thus initiating a cascade of down-stream signaling events leading to activation of the PI3K-AKT/PKB and the Ras-MAPK pathways. Binds to integrins ITGAV:ITGB3 and ITGA6:ITGB4. Its binding to integrins and subsequent ternary complex formation with integrins and IGFR1 are essential for IGF1 signaling. Induces the phosphorylation and activation of IGFR1, MAPK3/ERK1, MAPK1/ERK2 and AKT1. As part of the MAPK/ERK signaling pathway, acts as a negative regulator of apoptosis in cardiomyocytes via promotion of STUB1/CHIP-mediated ubiquitination and degradation of ICER-type isoforms of CREM. The chain is Insulin-like growth factor 1 from Equus caballus (Horse).